The primary structure comprises 345 residues: Phosphoribosylformylglycinamidine cyclo-ligase (345 aa).

This sequence belongs to the AIR synthase family.

It is found in the cytoplasm. The catalysed reaction is 2-formamido-N(1)-(5-O-phospho-beta-D-ribosyl)acetamidine + ATP = 5-amino-1-(5-phospho-beta-D-ribosyl)imidazole + ADP + phosphate + H(+). It participates in purine metabolism; IMP biosynthesis via de novo pathway; 5-amino-1-(5-phospho-D-ribosyl)imidazole from N(2)-formyl-N(1)-(5-phospho-D-ribosyl)glycinamide: step 2/2. This Salmonella choleraesuis (strain SC-B67) protein is Phosphoribosylformylglycinamidine cyclo-ligase.